The chain runs to 231 residues: Mediator of RNA polymerase II transcription subunit 18 (231 aa).

Residues 191–218 adopt a coiled-coil conformation; that stretch reads HLTDIEALNKAVKELEKVKTELHGLMNL.

It belongs to the Mediator complex subunit 18 family. Component of the Mediator complex.

The protein localises to the nucleus. Functionally, component of the Mediator complex, a coactivator involved in the regulated transcription of nearly all RNA polymerase II-dependent genes. Mediator functions as a bridge to convey information from gene-specific regulatory proteins to the basal RNA polymerase II transcription machinery. Mediator is recruited to promoters by direct interactions with regulatory proteins and serves as a scaffold for the assembly of a functional preinitiation complex with RNA polymerase II and the general transcription factors. This chain is Mediator of RNA polymerase II transcription subunit 18 (SRB5), found in Yarrowia lipolytica (strain CLIB 122 / E 150) (Yeast).